The chain runs to 546 residues: CTP synthase (546 aa).

The amidoligase domain stretch occupies residues M1 to I266. CTP is bound at residue S14. Position 14 (S14) interacts with UTP. ATP-binding positions include S15–I20 and D72. D72 and E140 together coordinate Mg(2+). Residues D147 to E149, K187 to Q192, and K223 each bind CTP. UTP is bound by residues K187–Q192 and K223. K239 to V241 is a binding site for ATP. In terms of domain architecture, Glutamine amidotransferase type-1 spans T291–G542. Residue G352 participates in L-glutamine binding. C379 functions as the Nucleophile; for glutamine hydrolysis in the catalytic mechanism. L-glutamine-binding positions include L380–Q383, E403, and R470. Residues H515 and E517 contribute to the active site.

The protein belongs to the CTP synthase family. In terms of assembly, homotetramer.

The enzyme catalyses UTP + L-glutamine + ATP + H2O = CTP + L-glutamate + ADP + phosphate + 2 H(+). It catalyses the reaction L-glutamine + H2O = L-glutamate + NH4(+). It carries out the reaction UTP + NH4(+) + ATP = CTP + ADP + phosphate + 2 H(+). It functions in the pathway pyrimidine metabolism; CTP biosynthesis via de novo pathway; CTP from UDP: step 2/2. Allosterically activated by GTP, when glutamine is the substrate; GTP has no effect on the reaction when ammonia is the substrate. The allosteric effector GTP functions by stabilizing the protein conformation that binds the tetrahedral intermediate(s) formed during glutamine hydrolysis. Inhibited by the product CTP, via allosteric rather than competitive inhibition. In terms of biological role, catalyzes the ATP-dependent amination of UTP to CTP with either L-glutamine or ammonia as the source of nitrogen. Regulates intracellular CTP levels through interactions with the four ribonucleotide triphosphates. This is CTP synthase from Vibrio parahaemolyticus serotype O3:K6 (strain RIMD 2210633).